A 368-amino-acid chain; its full sequence is MIRPCTFGIEEEYLLVNLGSGQVPATPSPAVMGRCREALGRYFAQEMFRSQIELASPVFTNLYEAREFLQRNRQRLRVALAEEGMGPYAAASHPCAAWLLQKPAAQGHYKQLFDDYRHVARRSLLNGLHVHVGVPPACDRMQLINRLLPWLPLLLALSTSSPLWAGQPTGYLSYRRVICGEWPHMGLPEALPDWAAYERYRALLQRTGALAADGDLWWALRPSRRYPTVELRICDGCPNLEDVLCIAALFRHLVEHSIAYRHDPLPCSRELRWIAQENYWRAMRHGRHAQFIGCHEQQPVTAQGWLAQLQAQIPIDSADAERACQHALHVLRHGTHADQQLRCLAQARADGLGKGQALRAVVAAGTCI.

It belongs to the glutamate--cysteine ligase type 2 family. YbdK subfamily.

It carries out the reaction L-cysteine + L-glutamate + ATP = gamma-L-glutamyl-L-cysteine + ADP + phosphate + H(+). Its function is as follows. ATP-dependent carboxylate-amine ligase which exhibits weak glutamate--cysteine ligase activity. This Pseudomonas putida (strain ATCC 47054 / DSM 6125 / CFBP 8728 / NCIMB 11950 / KT2440) protein is Putative glutamate--cysteine ligase 2.